A 460-amino-acid chain; its full sequence is Argininosuccinate lyase (460 aa).

Belongs to the lyase 1 family. Argininosuccinate lyase subfamily.

Its subcellular location is the cytoplasm. It carries out the reaction 2-(N(omega)-L-arginino)succinate = fumarate + L-arginine. The protein operates within amino-acid biosynthesis; L-arginine biosynthesis; L-arginine from L-ornithine and carbamoyl phosphate: step 3/3. The polypeptide is Argininosuccinate lyase (Maridesulfovibrio salexigens (strain ATCC 14822 / DSM 2638 / NCIMB 8403 / VKM B-1763) (Desulfovibrio salexigens)).